The primary structure comprises 2194 residues: Genome polyprotein (2194 aa).

A lipid anchor (N-myristoyl glycine; by host) is attached at Gly2. The Cytoplasmic segment spans residues 2 to 1504 (GAQVSTQKTG…HVSRAFICLQ (1503 aa)). The amphipathic alpha-helix stretch occupies residues 566–582 (LYQNDPEGALNKAVGRV). Active-site for protease 2A activity residues include His881 and Asp899. 2 residues coordinate Zn(2+): Cys916 and Cys918. Cys970 acts as the For protease 2A activity in catalysis. Zn(2+)-binding residues include Cys976 and His978. The segment at 1110–1182 (NNNWLKKFTE…EQSAPSQSDQ (73 aa)) is membrane-binding. The segment at 1110-1248 (NNNWLKKFTE…SPGAGKSVAT (139 aa)) is oligomerization. Positions 1131-1135 (AIKIQ) are RNA-binding. The region spanning 1214-1370 (EKKMSNYIQF…SMYSQNGKIN (157 aa)) is the SF3 helicase domain. 3 residues coordinate Zn(2+): Cys1378, Cys1390, and Cys1395. A C4-type; degenerate zinc finger spans residues 1378 to 1395 (CDEECCPVNFKRCCPLVC). The tract at residues 1422-1429 (EYNHRHSV) is RNA-binding. Residues 1433 to 1438 (LEALFQ) form an oligomerization region. An intramembrane segment occupies 1505–1520 (ALTTFVSVAGIIYIIY). Residues 1521–2194 (KLFAGFQGAY…TLRRKWLDSF (674 aa)) are Cytoplasmic-facing. Tyr1530 carries the O-(5'-phospho-RNA)-tyrosine modification. A Peptidase C3 domain is found at 1550–1728 (GPAFEFAVAM…FSAALLRHYF (179 aa)). Catalysis depends on for protease 3C activity residues His1589, Glu1620, and Cys1696. One can recognise a RdRp catalytic domain in the interval 1959–2075 (GHLIAFDYSG…SYPHPIDASL (117 aa)). Residues Asp1965 and Asp2061 each coordinate Mg(2+).

Belongs to the picornaviruses polyprotein family. Interacts with capsid protein VP1 and capsid protein VP3 to form heterotrimeric protomers. In terms of assembly, interacts with capsid protein VP0, and capsid protein VP3 to form heterotrimeric protomers. Five protomers subsequently associate to form pentamers which serve as building blocks for the capsid. Interacts with capsid protein VP2, capsid protein VP3 and capsid protein VP4 following cleavage of capsid protein VP0. As to quaternary structure, interacts with capsid protein VP1 and capsid protein VP3 in the mature capsid. Interacts with capsid protein VP0 and capsid protein VP1 to form heterotrimeric protomers. Five protomers subsequently associate to form pentamers which serve as building blocks for the capsid. Interacts with capsid protein VP4 in the mature capsid. Interacts with protein 2C; this interaction may be important for virion morphogenesis. In terms of assembly, interacts with capsid protein VP1 and capsid protein VP3. As to quaternary structure, homodimer. Homohexamer; forms a hexameric ring structure with 6-fold symmetry characteristic of AAA+ ATPases. Interacts (via N-terminus) with host RTN3 (via reticulon domain); this interaction is important for viral replication. Interacts with capsid protein VP3; this interaction may be important for virion morphogenesis. In terms of assembly, interacts with protein 3CD. As to quaternary structure, homodimer. Interacts with host GBF1. Interacts (via GOLD domain) with host ACBD3 (via GOLD domain); this interaction allows the formation of a viral protein 3A/ACBD3 heterotetramer with a 2:2 stoichiometry, which will stimulate the recruitment of host PI4KB in order to synthesize PI4P at the viral RNA replication sites. Interacts with RNA-directed RNA polymerase. In terms of assembly, interacts with protein 3AB and with RNA-directed RNA polymerase. As to quaternary structure, interacts with Viral protein genome-linked and with protein 3CD. Requires Mg(2+) as cofactor. Specific enzymatic cleavages in vivo by the viral proteases yield processing intermediates and the mature proteins. Post-translationally, myristoylation is required for the formation of pentamers during virus assembly. Further assembly of 12 pentamers and a molecule of genomic RNA generates the provirion. In terms of processing, during virion maturation, immature virions are rendered infectious following cleavage of VP0 into VP4 and VP2. This maturation seems to be an autocatalytic event triggered by the presence of RNA in the capsid and it is followed by a conformational change infectious virion. Myristoylation is required during RNA encapsidation and formation of the mature virus particle. Post-translationally, VPg is uridylylated by the polymerase into VPg-pUpU. This acts as a nucleotide-peptide primer for the genomic RNA replication.

The protein localises to the virion. The protein resides in the host cytoplasm. Its subcellular location is the host cytoplasmic vesicle membrane. It is found in the host nucleus. It carries out the reaction a ribonucleoside 5'-triphosphate + H2O = a ribonucleoside 5'-diphosphate + phosphate + H(+). The catalysed reaction is Selective cleavage of Tyr-|-Gly bond in the picornavirus polyprotein.. It catalyses the reaction RNA(n) + a ribonucleoside 5'-triphosphate = RNA(n+1) + diphosphate. The enzyme catalyses Selective cleavage of Gln-|-Gly bond in the poliovirus polyprotein. In other picornavirus reactions Glu may be substituted for Gln, and Ser or Thr for Gly.. Replication or transcription is subject to high level of random mutations by the nucleotide analog ribavirin. In terms of biological role, forms an icosahedral capsid of pseudo T=3 symmetry with capsid proteins VP2 and VP3. The capsid is 300 Angstroms in diameter, composed of 60 copies of each capsid protein and enclosing the viral positive strand RNA genome. Capsid protein VP1 mainly forms the vertices of the capsid. Capsid protein VP1 interacts with host cell receptor to provide virion attachment to target host cells. This attachment induces virion internalization. Tyrosine kinases are probably involved in the entry process. After binding to its receptor, the capsid undergoes conformational changes. Capsid protein VP1 N-terminus (that contains an amphipathic alpha-helix) and capsid protein VP4 are externalized. Together, they shape a pore in the host membrane through which viral genome is translocated to host cell cytoplasm. Forms an icosahedral capsid of pseudo T=3 symmetry with capsid proteins VP2 and VP3. The capsid is 300 Angstroms in diameter, composed of 60 copies of each capsid protein and enclosing the viral positive strand RNA genome. Its function is as follows. Lies on the inner surface of the capsid shell. After binding to the host receptor, the capsid undergoes conformational changes. Capsid protein VP4 is released, Capsid protein VP1 N-terminus is externalized, and together, they shape a pore in the host membrane through which the viral genome is translocated into the host cell cytoplasm. Functionally, component of immature procapsids, which is cleaved into capsid proteins VP4 and VP2 after maturation. Allows the capsid to remain inactive before the maturation step. In terms of biological role, cysteine protease that cleaves viral polyprotein and specific host proteins. It is responsible for the autocatalytic cleavage between the P1 and P2 regions, which is the first cleavage occurring in the polyprotein. Also cleaves the host translation initiation factor EIF4G1, in order to shut down the capped cellular mRNA translation. Inhibits the host nucleus-cytoplasm protein and RNA trafficking by cleaving host members of the nuclear pores. Counteracts stress granule formation probably by antagonizing its assembly or promoting its dissassembly. Plays an essential role in the virus replication cycle by acting as a viroporin. Creates a pore in the host endoplasmic reticulum and as a consequence releases Ca2+ in the cytoplasm of infected cell. In turn, high levels of cytoplasmic calcium may trigger membrane trafficking and transport of viral ER-associated proteins to viroplasms, sites of viral genome replication. Its function is as follows. Induces and associates with structural rearrangements of intracellular membranes. Displays RNA-binding, nucleotide binding and NTPase activities. May play a role in virion morphogenesis and viral RNA encapsidation by interacting with the capsid protein VP3. Functionally, localizes the viral replication complex to the surface of membranous vesicles. Together with protein 3CD binds the Cis-Active RNA Element (CRE) which is involved in RNA synthesis initiation. Acts as a cofactor to stimulate the activity of 3D polymerase, maybe through a nucleid acid chaperone activity. In terms of biological role, localizes the viral replication complex to the surface of membranous vesicles. It inhibits host cell endoplasmic reticulum-to-Golgi apparatus transport and causes the disassembly of the Golgi complex, possibly through GBF1 interaction. This would result in depletion of MHC, trail receptors and IFN receptors at the host cell surface. Plays an essential role in viral RNA replication by recruiting ACBD3 and PI4KB at the viral replication sites, thereby allowing the formation of the rearranged membranous structures where viral replication takes place. Acts as a primer for viral RNA replication and remains covalently bound to viral genomic RNA. VPg is uridylylated prior to priming replication into VPg-pUpU. The oriI viral genomic sequence may act as a template for this. The VPg-pUpU is then used as primer on the genomic RNA poly(A) by the RNA-dependent RNA polymerase to replicate the viral genome. During genome replication, the VPg-RNA linkage is removed by the host TDP2, thereby accelerating replication. During the late stage of the replication cycle, host TDP2 is excluded from sites of viral RNA synthesis and encapsidation, allowing for the generation of progeny virions. Its function is as follows. Involved in the viral replication complex and viral polypeptide maturation. It exhibits protease activity with a specificity and catalytic efficiency that is different from protease 3C. Protein 3CD lacks polymerase activity. Protein 3CD binds to the 5'UTR of the viral genome. Functionally, replicates the viral genomic RNA on the surface of intracellular membranes. May form linear arrays of subunits that propagate along a strong head-to-tail interaction called interface-I. Covalently attaches UMP to a tyrosine of VPg, which is used to prime RNA synthesis. The positive stranded RNA genome is first replicated at virus induced membranous vesicles, creating a dsRNA genomic replication form. This dsRNA is then used as template to synthesize positive stranded RNA genomes. ss(+)RNA genomes are either translated, replicated or encapsidated. In terms of biological role, major viral protease that mediates proteolytic processing of the polyprotein. Cleaves host EIF5B, contributing to host translation shutoff. Also cleaves host PABPC1, contributing to host translation shutoff. Cleaves host NLRP1, triggers host N-glycine-mediated degradation of the autoinhibitory NLRP1 N-terminal fragment. This chain is Genome polyprotein, found in Homo sapiens (Human).